The following is a 293-amino-acid chain: Protein YIF1A (293 aa).

The tract at residues 1–33 is disordered; sequence MAYHSGYGAHGSKHRARAAPDPPPLFDDTSGGY. N-acetylalanine is present on A2. Residues 2-138 are Cytoplasmic-facing; it reads AYHSGYGAHG…PPRQDLNAPD (137 aa). Residue S12 is modified to Phosphoserine. A helical membrane pass occupies residues 139 to 159; the sequence is LYIPTMAFITYVLLAGMALGI. Topologically, residues 160–174 are lumenal; the sequence is QKRFSPEVLGLCAST. The helical transmembrane segment at 175–195 threads the bilayer; sequence ALVWVVMEVLALLLGLYLATV. Over 196 to 203 the chain is Cytoplasmic; it reads RSDLSTFH. The helical transmembrane segment at 204 to 226 threads the bilayer; it reads LLAYSGYKYVGMILSVLTGLLFG. Residues 227–229 lie on the Lumenal side of the membrane; sequence SDG. Residues 230–249 traverse the membrane as a helical segment; sequence YYVALAWTSSALMYFIVRSL. The Cytoplasmic portion of the chain corresponds to 250–271; that stretch reads RTAALGPDSMGGPVPRQRLQLY. The helical transmembrane segment at 272-292 threads the bilayer; sequence LTLGAAAFQPLIIYWLTFHLV.

The protein belongs to the YIF1 family. Interacts with YIPF5.

Its subcellular location is the endoplasmic reticulum membrane. The protein resides in the golgi apparatus membrane. It localises to the endoplasmic reticulum-Golgi intermediate compartment membrane. In terms of biological role, possible role in transport between endoplasmic reticulum and Golgi. In Homo sapiens (Human), this protein is Protein YIF1A (YIF1A).